A 420-amino-acid chain; its full sequence is Ammonia monooxygenase beta subunit (420 aa).

The signal sequence occupies residues 1–25; sequence MGIKNLYKRGVMGLYGVAYAVAALA. Cu cation-binding residues include His38, His142, and His144. 2 helical membrane-spanning segments follow: residues 193–213 and 240–260; these read GIFW…VFTA and ITWV…RYTE.

As to quaternary structure, the soluble ammonia monooxygenase is a nonamer composed of three alpha subunits (AmoA), three beta subunits (AmoB) and three gamma subunits (Cytochrome c1 PetC). The cofactor is Cu(2+).

It is found in the cell membrane. Its subcellular location is the cytoplasm. The catalysed reaction is AH2 + NH4(+) + O2 = hydroxylamine + A + H2O + H(+). In vitro, inhibited by acetylene. In terms of biological role, part of the ammonia monooxygenase complex, which catalyzes the oxidation of ammonia to hydroxylamine, the first reaction in the process of ammonia oxidation to nitrite. This Nitrosomonas europaea (strain ATCC 19718 / CIP 103999 / KCTC 2705 / NBRC 14298) protein is Ammonia monooxygenase beta subunit.